Here is a 275-residue protein sequence, read N- to C-terminus: 2,3,4,5-tetrahydropyridine-2,6-dicarboxylate N-succinyltransferase (275 aa).

Positions 104 and 141 each coordinate substrate.

This sequence belongs to the transferase hexapeptide repeat family. In terms of assembly, homotrimer.

It is found in the cytoplasm. It carries out the reaction (S)-2,3,4,5-tetrahydrodipicolinate + succinyl-CoA + H2O = (S)-2-succinylamino-6-oxoheptanedioate + CoA. It functions in the pathway amino-acid biosynthesis; L-lysine biosynthesis via DAP pathway; LL-2,6-diaminopimelate from (S)-tetrahydrodipicolinate (succinylase route): step 1/3. The chain is 2,3,4,5-tetrahydropyridine-2,6-dicarboxylate N-succinyltransferase from Haemophilus influenzae (strain 86-028NP).